Consider the following 458-residue polypeptide: MKIYNTLSGKLEEFVPLEDGKVKMYVCGITPQSEPHIGHAMSYINFDVIRRYLSYKGYRVKYIQNFTDIDDKIIAKANAQGIEPSTLAERNIGVFLDAMAALNITPADYYPRATQEVPKIIEMVSGLIEKGYAYEAGGSVYLRVQKVEGYGKLSHRTLEQMMAGARIEPGEEKEYPMDFALWKATKPGEPSWESPWGLGRPGWHIECSAMSLRYLGEQIDIHGGGQDLIFPHHENEIAQSECFSGVKPFVKYWLHNGLLKLGEEKMSKSLGNLVTIKEALSRYSADALRIFVLSSSYRNPLTYSEEALEAAEKGAERLRQTAARQDNPRLQEINVDVKTYRERFTQYMDNDFNTSAALATIFDLGRELNRIEAEGGKSTQGQELFKELAGILGLSLIIAEPTTSADAAPFIDMLIELRKDLRLAKQYQLADKIRTSLDAAGILLEDSAGGTIWKIKTK.

Position 27 (Cys-27) interacts with Zn(2+). The short motif at 29 to 39 (ITPQSEPHIGH) is the 'HIGH' region element. Residues Cys-207, His-232, and Glu-236 each coordinate Zn(2+). The 'KMSKS' region motif lies at 265–269 (KMSKS). An ATP-binding site is contributed by Lys-268.

This sequence belongs to the class-I aminoacyl-tRNA synthetase family. In terms of assembly, monomer. Zn(2+) serves as cofactor.

The protein resides in the cytoplasm. The enzyme catalyses tRNA(Cys) + L-cysteine + ATP = L-cysteinyl-tRNA(Cys) + AMP + diphosphate. The sequence is that of Cysteine--tRNA ligase from Dehalococcoides mccartyi (strain ATCC BAA-2266 / KCTC 15142 / 195) (Dehalococcoides ethenogenes (strain 195)).